The following is a 763-amino-acid chain: Translation initiation factor IF-2 (763 aa).

Positions 52–178 (KQKKVQTSQN…KDEAIKHETK (127 aa)) are disordered. The segment covering 65–82 (SNDENKKITNKNTEKTTE) has biased composition (basic and acidic residues). Residues 86–96 (TVDSNKQNNSN) show a composition bias toward polar residues. Composition is skewed to basic and acidic residues over residues 105–116 (RNNDEESVSHFD) and 123–135 (KSEM…LNDK). Residues 136–145 (KKNKNFKNTK) show a composition bias toward basic residues. Low complexity predominate over residues 146–161 (NKNSNNNKNSKNNKNN). Positions 162 to 178 (KNNDHNRKDEAIKHETK) are enriched in basic and acidic residues. Positions 265-434 (ERPPVITVMG…LMVAEMEELK (170 aa)) constitute a tr-type G domain. Positions 274 to 281 (GHVDHGKT) are G1. 274-281 (GHVDHGKT) provides a ligand contact to GTP. The segment at 299 to 303 (GITQH) is G2. The segment at 320–323 (DTPG) is G3. GTP-binding positions include 320 to 324 (DTPGH) and 374 to 377 (NKID). Residues 374–377 (NKID) are G4. The G5 stretch occupies residues 410 to 412 (SAR).

The protein belongs to the TRAFAC class translation factor GTPase superfamily. Classic translation factor GTPase family. IF-2 subfamily.

The protein resides in the cytoplasm. Its function is as follows. One of the essential components for the initiation of protein synthesis. Protects formylmethionyl-tRNA from spontaneous hydrolysis and promotes its binding to the 30S ribosomal subunits. Also involved in the hydrolysis of GTP during the formation of the 70S ribosomal complex. The sequence is that of Translation initiation factor IF-2 from Finegoldia magna (strain ATCC 29328 / DSM 20472 / WAL 2508) (Peptostreptococcus magnus).